The sequence spans 1180 residues: Lon protease homolog 2, peroxisomal (1180 aa).

One can recognise a Lon N-terminal domain in the interval 19 to 366; the sequence is LPTCKLDSNL…ELINMINQLI (348 aa). Residues 416–465 form a disordered region; that stretch reads PISNRGNIKSFNNSENGNNNKTNGSGITSRRPKSNEDGGEVYDEEDDDEE. The span at 422–444 shows a compositional bias: low complexity; that stretch reads NIKSFNNSENGNNNKTNGSGITS. The segment covering 452 to 465 has biased composition (acidic residues); that stretch reads DGGEVYDEEDDDEE. ATP is bound at residue 667–674; it reads GPPGTGKT. The Lon proteolytic domain maps to 924-1163; that stretch reads NSRVGIVNGL…YDVMKILWGE (240 aa). Catalysis depends on residues S1032 and K1075.

Belongs to the peptidase S16 family.

The protein localises to the peroxisome matrix. It carries out the reaction Hydrolysis of proteins in presence of ATP.. ATP-dependent serine protease that mediates the selective degradation of misfolded and unassembled polypeptides in the peroxisomal matrix. Necessary for type 2 peroxisome targeting signal (PTS2)-containing protein processing and facilitates peroxisome matrix protein import. This is Lon protease homolog 2, peroxisomal from Scheffersomyces stipitis (strain ATCC 58785 / CBS 6054 / NBRC 10063 / NRRL Y-11545) (Yeast).